Reading from the N-terminus, the 155-residue chain is Ribosomal RNA large subunit methyltransferase H (155 aa).

Residues Leu72, Gly103, and 122–127 (LSDLTL) each bind S-adenosyl-L-methionine.

It belongs to the RNA methyltransferase RlmH family. As to quaternary structure, homodimer.

Its subcellular location is the cytoplasm. The enzyme catalyses pseudouridine(1915) in 23S rRNA + S-adenosyl-L-methionine = N(3)-methylpseudouridine(1915) in 23S rRNA + S-adenosyl-L-homocysteine + H(+). Specifically methylates the pseudouridine at position 1915 (m3Psi1915) in 23S rRNA. In Verminephrobacter eiseniae (strain EF01-2), this protein is Ribosomal RNA large subunit methyltransferase H.